The primary structure comprises 438 residues: Chaperone SurA (438 aa).

Residues 1–28 (MKTMNPYIRHLILLICCLGGMLAQPLSA) form the signal peptide. 2 consecutive PpiC domains span residues 181 to 282 (EEEY…KLVS) and 292 to 390 (VQQT…QVLE).

The protein resides in the periplasm. The enzyme catalyses [protein]-peptidylproline (omega=180) = [protein]-peptidylproline (omega=0). In terms of biological role, chaperone involved in the correct folding and assembly of outer membrane proteins. Recognizes specific patterns of aromatic residues and the orientation of their side chains, which are found more frequently in integral outer membrane proteins. May act in both early periplasmic and late outer membrane-associated steps of protein maturation. This Dechloromonas aromatica (strain RCB) protein is Chaperone SurA.